The sequence spans 465 residues: ATP synthase subunit beta (465 aa).

Position 149–156 (149–156 (GGAGVGKT)) interacts with ATP.

It belongs to the ATPase alpha/beta chains family. In terms of assembly, F-type ATPases have 2 components, CF(1) - the catalytic core - and CF(0) - the membrane proton channel. CF(1) has five subunits: alpha(3), beta(3), gamma(1), delta(1), epsilon(1). CF(0) has three main subunits: a(1), b(2) and c(9-12). The alpha and beta chains form an alternating ring which encloses part of the gamma chain. CF(1) is attached to CF(0) by a central stalk formed by the gamma and epsilon chains, while a peripheral stalk is formed by the delta and b chains.

The protein resides in the cell inner membrane. It catalyses the reaction ATP + H2O + 4 H(+)(in) = ADP + phosphate + 5 H(+)(out). Its function is as follows. Produces ATP from ADP in the presence of a proton gradient across the membrane. The catalytic sites are hosted primarily by the beta subunits. This Dictyoglomus thermophilum (strain ATCC 35947 / DSM 3960 / H-6-12) protein is ATP synthase subunit beta.